The following is a 290-amino-acid chain: 7-methylguanosine phosphate-specific 5'-nucleotidase A (290 aa).

Catalysis depends on aspartate 39, which acts as the Nucleophile. The Mg(2+) site is built by aspartate 39 and aspartate 41. Residue aspartate 41 is the Proton donor of the active site. Glutamate 86 serves as a coordination point for CMP. Position 86 (glutamate 86) interacts with N(7)-methyl-GMP. Substrate contacts are provided by residues 154–155 (SA) and lysine 203. Position 228 (aspartate 228) interacts with Mg(2+).

The protein belongs to the pyrimidine 5'-nucleotidase family. As to quaternary structure, monomer.

The protein localises to the cytoplasm. The enzyme catalyses N(7)-methyl-GMP + H2O = N(7)-methylguanosine + phosphate. The catalysed reaction is CMP + H2O = cytidine + phosphate. It carries out the reaction a ribonucleoside 5'-phosphate + H2O = a ribonucleoside + phosphate. In terms of biological role, specifically hydrolyzes 7-methylguanosine monophosphate (m(7)GMP) to 7-methylguanosine and inorganic phosphate. The specific activity for m(7)GMP may protect cells against undesired salvage of m(7)GMP and its incorporation into nucleic acids. Also has weak activity for CMP. UMP and purine nucleotides are poor substrates. This is 7-methylguanosine phosphate-specific 5'-nucleotidase A (Nt5c3b-a) from Xenopus laevis (African clawed frog).